The chain runs to 111 residues: uncharacterized protein (111 aa).

This is an uncharacterized protein from Streptomyces coelicolor (strain ATCC BAA-471 / A3(2) / M145).